The chain runs to 213 residues: Small ribosomal subunit protein uS3 (213 aa).

The 69-residue stretch at 38–106 (IRKYVKEKIF…EFALEVSEIR (69 aa)) folds into the KH type-2 domain.

This sequence belongs to the universal ribosomal protein uS3 family. As to quaternary structure, part of the 30S ribosomal subunit. Forms a tight complex with proteins S10 and S14.

Binds the lower part of the 30S subunit head. Binds mRNA in the 70S ribosome, positioning it for translation. The sequence is that of Small ribosomal subunit protein uS3 from Maridesulfovibrio salexigens (strain ATCC 14822 / DSM 2638 / NCIMB 8403 / VKM B-1763) (Desulfovibrio salexigens).